Reading from the N-terminus, the 264-residue chain is tRNA pseudouridine synthase A (264 aa).

Catalysis depends on aspartate 51, which acts as the Nucleophile. A substrate-binding site is contributed by tyrosine 109.

Belongs to the tRNA pseudouridine synthase TruA family. Homodimer.

The enzyme catalyses uridine(38/39/40) in tRNA = pseudouridine(38/39/40) in tRNA. Formation of pseudouridine at positions 38, 39 and 40 in the anticodon stem and loop of transfer RNAs. This Polaromonas sp. (strain JS666 / ATCC BAA-500) protein is tRNA pseudouridine synthase A.